Here is a 211-residue protein sequence, read N- to C-terminus: Pyridoxine/pyridoxamine 5'-phosphate oxidase (211 aa).

Substrate is bound by residues 7 to 10 (RREY) and Lys-65. FMN is bound by residues 60–65 (RIVLLK), 75–76 (YT), Arg-81, Lys-82, and Gln-104. Residues Tyr-122, Arg-126, and Ser-130 each coordinate substrate. FMN-binding positions include 139-140 (QS) and Trp-184. 190-192 (RLH) contributes to the substrate binding site. Arg-194 provides a ligand contact to FMN.

Belongs to the pyridoxamine 5'-phosphate oxidase family. In terms of assembly, homodimer. FMN serves as cofactor.

It catalyses the reaction pyridoxamine 5'-phosphate + O2 + H2O = pyridoxal 5'-phosphate + H2O2 + NH4(+). The catalysed reaction is pyridoxine 5'-phosphate + O2 = pyridoxal 5'-phosphate + H2O2. It functions in the pathway cofactor metabolism; pyridoxal 5'-phosphate salvage; pyridoxal 5'-phosphate from pyridoxamine 5'-phosphate: step 1/1. It participates in cofactor metabolism; pyridoxal 5'-phosphate salvage; pyridoxal 5'-phosphate from pyridoxine 5'-phosphate: step 1/1. Catalyzes the oxidation of either pyridoxine 5'-phosphate (PNP) or pyridoxamine 5'-phosphate (PMP) into pyridoxal 5'-phosphate (PLP). The sequence is that of Pyridoxine/pyridoxamine 5'-phosphate oxidase from Vibrio campbellii (strain ATCC BAA-1116).